The sequence spans 650 residues: DNA gyrase subunit B (650 aa).

In terms of domain architecture, Toprim spans 429-543; sequence NELFIVEGDS…AGYVYIAQPP (115 aa). 3 residues coordinate Mg(2+): E435, D508, and D510.

It belongs to the type II topoisomerase GyrB family. Heterotetramer, composed of two GyrA and two GyrB chains. In the heterotetramer, GyrA contains the active site tyrosine that forms a transient covalent intermediate with DNA, while GyrB binds cofactors and catalyzes ATP hydrolysis. Mg(2+) is required as a cofactor. The cofactor is Mn(2+). It depends on Ca(2+) as a cofactor.

Its subcellular location is the cytoplasm. It carries out the reaction ATP-dependent breakage, passage and rejoining of double-stranded DNA.. Its function is as follows. A type II topoisomerase that negatively supercoils closed circular double-stranded (ds) DNA in an ATP-dependent manner to modulate DNA topology and maintain chromosomes in an underwound state. Negative supercoiling favors strand separation, and DNA replication, transcription, recombination and repair, all of which involve strand separation. Also able to catalyze the interconversion of other topological isomers of dsDNA rings, including catenanes and knotted rings. Type II topoisomerases break and join 2 DNA strands simultaneously in an ATP-dependent manner. This Streptococcus pyogenes serotype M3 (strain ATCC BAA-595 / MGAS315) protein is DNA gyrase subunit B.